The sequence spans 96 residues: MALTLADVDKIARLSRLQLTAEEKEKSLQELNDIFTMVEQMQNINTDGIEPMAHPHEVALRLREDEVTETDRAAEYQAVAPEVRNRLYIVPQVIEE.

It belongs to the GatC family. Heterotrimer of A, B and C subunits.

The enzyme catalyses L-glutamyl-tRNA(Gln) + L-glutamine + ATP + H2O = L-glutaminyl-tRNA(Gln) + L-glutamate + ADP + phosphate + H(+). It carries out the reaction L-aspartyl-tRNA(Asn) + L-glutamine + ATP + H2O = L-asparaginyl-tRNA(Asn) + L-glutamate + ADP + phosphate + 2 H(+). Allows the formation of correctly charged Asn-tRNA(Asn) or Gln-tRNA(Gln) through the transamidation of misacylated Asp-tRNA(Asn) or Glu-tRNA(Gln) in organisms which lack either or both of asparaginyl-tRNA or glutaminyl-tRNA synthetases. The reaction takes place in the presence of glutamine and ATP through an activated phospho-Asp-tRNA(Asn) or phospho-Glu-tRNA(Gln). The sequence is that of Aspartyl/glutamyl-tRNA(Asn/Gln) amidotransferase subunit C from Neisseria gonorrhoeae (strain ATCC 700825 / FA 1090).